The chain runs to 418 residues: F-box/kelch-repeat protein SKIP20 (418 aa).

One can recognise an F-box domain in the interval 14 to 61 (DLIPGLPEELAIECLVRVPFQFHSSIKSVCRSWKCVISSRSFIKERIG). Residues 79 to 104 (PSPAMMEGGEMSQKKKEEEEGESQMT) form a disordered region. Kelch repeat units lie at residues 104-150 (TQQL…AIQD), 153-206 (KVLL…SVGS), 208-255 (KVYV…SMAT), and 258-314 (GFCV…EFPG).

Part of a SCF (ASK-cullin-F-box) protein ligase complex. Interacts with SKP1A/ASK1 and SPK1B/ASK2.

It localises to the nucleus. It participates in protein modification; protein ubiquitination. Functionally, component of SCF(ASK-cullin-F-box) E3 ubiquitin ligase complexes, which may mediate the ubiquitination and subsequent proteasomal degradation of target proteins. In Arabidopsis thaliana (Mouse-ear cress), this protein is F-box/kelch-repeat protein SKIP20 (SKIP20).